A 166-amino-acid chain; its full sequence is Endoribonuclease YbeY (166 aa).

Histidine 132, histidine 136, and histidine 142 together coordinate Zn(2+).

The protein belongs to the endoribonuclease YbeY family. It depends on Zn(2+) as a cofactor.

The protein localises to the cytoplasm. Its function is as follows. Single strand-specific metallo-endoribonuclease involved in late-stage 70S ribosome quality control and in maturation of the 3' terminus of the 16S rRNA. This Clostridium botulinum (strain Kyoto / Type A2) protein is Endoribonuclease YbeY.